The sequence spans 21 residues: Peptide PGLa-B2 (21 aa).

Leucine 21 carries the leucine amide modification.

Expressed by the skin glands.

Its subcellular location is the secreted. In terms of biological role, has antimicrobial activity against Gram-negative bacterium E.coli ATCC 25922 (MIC=25 uM), Gram-positive bacterium S.auerus ATCC 25923 (MIC=50 uM) and against fungus C.albicans ATCC 90028 (MIC=25 uM). Has some hemolytic activity against human erythrocytes at high concentration. The polypeptide is Peptide PGLa-B2 (Xenopus borealis (Kenyan clawed frog)).